The sequence spans 577 residues: Arginine--tRNA ligase (577 aa).

A 'HIGH' region motif is present at residues 132 to 142 (ANPTGPLHVGH).

It belongs to the class-I aminoacyl-tRNA synthetase family. As to quaternary structure, monomer.

Its subcellular location is the cytoplasm. The enzyme catalyses tRNA(Arg) + L-arginine + ATP = L-arginyl-tRNA(Arg) + AMP + diphosphate. The sequence is that of Arginine--tRNA ligase from Janthinobacterium sp. (strain Marseille) (Minibacterium massiliensis).